Here is a 129-residue protein sequence, read N- to C-terminus: Glycerol-3-phosphate cytidylyltransferase (129 aa).

Residues threonine 9 to phenylalanine 10 and histidine 14 to histidine 17 each bind CTP. Lysine 44 serves as a coordination point for substrate. Lysine 46 contributes to the CTP binding site. Residue lysine 77 coordinates substrate. Arginine 113–threonine 120 provides a ligand contact to CTP.

The protein belongs to the cytidylyltransferase family. Homodimer.

It is found in the cytoplasm. It carries out the reaction sn-glycerol 3-phosphate + CTP + H(+) = CDP-glycerol + diphosphate. The protein operates within cell wall biogenesis; poly(ribitol phosphate) teichoic acid biosynthesis. Catalyzes the transfer of the cytidylyl group of CTP to sn-glycerol 3-phosphate so the activated glycerol 3-phosphate can be used for teichoic acid synthesis, via incorporation into both the linkage unit by TarB and TarF. The polypeptide is Glycerol-3-phosphate cytidylyltransferase (tarD) (Bacillus spizizenii (strain ATCC 23059 / NRRL B-14472 / W23) (Bacillus subtilis subsp. spizizenii)).